A 69-amino-acid chain; its full sequence is MTNASKPPVVNCPICGATVKWLAENRWKPFCSERCKLIDLGQWATEKYRVPVEPKPDEGETPDQAERPQ.

4 residues coordinate Zn(2+): Cys12, Cys15, Cys31, and Cys35. The interval 49-69 is disordered; the sequence is RVPVEPKPDEGETPDQAERPQ.

Belongs to the DNA gyrase inhibitor YacG family. As to quaternary structure, interacts with GyrB. Zn(2+) serves as cofactor.

Inhibits all the catalytic activities of DNA gyrase by preventing its interaction with DNA. Acts by binding directly to the C-terminal domain of GyrB, which probably disrupts DNA binding by the gyrase. In Thiobacillus denitrificans (strain ATCC 25259 / T1), this protein is DNA gyrase inhibitor YacG.